A 96-amino-acid chain; its full sequence is Neurotoxin beta-KTx 31.1 (96 aa).

Positions 1 to 21 are cleaved as a signal peptide; sequence MQAKRTILLLLLLGMVALSSC. A propeptide spanning residues 22-29 is cleaved from the precursor; the sequence is GLREKHVQ. In terms of domain architecture, BetaSPN-type CS-alpha/beta spans 56 to 93; the sequence is QYGCPIIKDYCSFHCNDLEKHEGYCHGTKCKCNIPNQY. 3 cysteine pairs are disulfide-bonded: cysteine 59–cysteine 80, cysteine 66–cysteine 85, and cysteine 70–cysteine 87.

The protein belongs to the long chain scorpion toxin family. Class 1 subfamily. In terms of tissue distribution, expressed by the venom gland.

It is found in the secreted. Its function is as follows. Inhibits voltage-gated potassium channel. The sequence is that of Neurotoxin beta-KTx 31.1 from Lychas mucronatus (Chinese swimming scorpion).